A 278-amino-acid chain; its full sequence is Putative ABC transporter ATP-binding protein MTBMA_c05830 (278 aa).

In terms of domain architecture, ABC transporter spans 4–239; the sequence is IEAVNIRYTY…IDTIRGADLR (236 aa). 37–44 contacts ATP; it reads GPNGAGKS.

It belongs to the ABC transporter superfamily.

The protein resides in the cell membrane. Functionally, probably part of an ABC transporter complex. Responsible for energy coupling to the transport system. The sequence is that of Putative ABC transporter ATP-binding protein MTBMA_c05830 from Methanothermobacter marburgensis (strain ATCC BAA-927 / DSM 2133 / JCM 14651 / NBRC 100331 / OCM 82 / Marburg) (Methanobacterium thermoautotrophicum).